The primary structure comprises 1312 residues: Cyclic GMP-binding protein D (1312 aa).

Residues 26 to 155 form the N-terminal Ras-GEF domain; the sequence is GFSAIKSCSL…EFFKAKKMAR (130 aa). Composition is skewed to low complexity over residues 206–236 and 275–296; these read NTMNGINGTSNNNVNSNNNNNNGTTNISSPN and NGTSPQSSPSSTLSSTNSLFNQ. Disordered stretches follow at residues 206–244 and 260–326; these read NTMNGINGTSNNNVNSNNNNNNGTTNISSPNFDPSRSSM and NFNN…NNVN. Residues 297-310 show a composition bias toward polar residues; the sequence is QPSLSMLNDDGSVQ. The span at 311–326 shows a compositional bias: low complexity; the sequence is NNNNNNNNNNNNNNVN. The Ras-GEF domain maps to 353-582; that stretch reads LPEAIAKELT…FRLSKIREET (230 aa). The segment at 586–658 is disordered; that stretch reads QSLKESNGIG…NCGNGSGISS (73 aa). Residues 591 to 612 are compositionally biased toward low complexity; the sequence is SNGIGNSNSTSGGSSSSLVNKD. Gly residues predominate over residues 613-625; it reads GSGGGGGSGGGGS. The span at 630 to 644 shows a compositional bias: basic and acidic residues; that stretch reads GDGKGDGKDNRDGRG. A compositionally biased stretch (low complexity) spans 646-657; sequence GNSNCGNGSGIS. 698 to 857 provides a ligand contact to a nucleoside 3',5'-cyclic phosphate; sequence VSSTLSEREW…ATFYKFIGVI (160 aa). In terms of domain architecture, GRAM spans 940–1006; sequence SSFRTKFGLS…DKILTVDKNI (67 aa). Positions 1059 to 1087 are enriched in low complexity; that stretch reads QQQQPSQQPSQQQSQSSQLQQSVSASSTT. Disordered stretches follow at residues 1059-1108 and 1167-1210; these read QQQQ…IKDL and NNIN…NSSI. Residues 1105–1218 and 1182–1303 contribute to the a nucleoside 3',5'-cyclic phosphate site; these read IKDL…SNTS and NNNN…LACV.

Its function is as follows. Promotes the exchange of Ras-bound GDP by GTP. Induces the formation of substrate-attached pseudopodia, that leads to increased adhesion and thereby negatively influencing cell speed and polarity. The protein is Cyclic GMP-binding protein D (gbpD) of Dictyostelium discoideum (Social amoeba).